Reading from the N-terminus, the 962-residue chain is Vacuolar membrane protease (962 aa).

At 1 to 15 (MVSSRRGFNPIAFTP) the chain is on the cytoplasmic side. Residues 16–36 (WPVTILSSLVYLALIIPIIVV) traverse the membrane as a helical segment. The Vacuolar portion of the chain corresponds to 37-390 (HHLVPPAPKE…FQLNTLFGHS (354 aa)). 2 N-linked (GlcNAc...) asparagine glycosylation sites follow: N110 and N113. The Zn(2+) site is built by H169 and D181. The Proton acceptor role is filled by E215. Zn(2+) is bound by residues E216, E241, and H314. The chain crosses the membrane as a helical span at residues 391–411 (VALLVVAPLLLIITSVALFAV). Residues 412–440 (DKMYMFSMYTYISESGGQVSLYGLRGMFR) lie on the Cytoplasmic side of the membrane. Residues 441–461 (FPLILGISTALTIALAFLIMK) traverse the membrane as a helical segment. The Vacuolar portion of the chain corresponds to 462–472 (VNPFIIYSSPY). Residues 473–493 (AVWSMMLSTCMFFAWFISCVA) form a helical membrane-spanning segment. The Cytoplasmic segment spans residues 494 to 503 (DFARPSALHR). The helical transmembrane segment at 504–524 (AYSFSWMFGIMWVFLVIATVY) threads the bilayer. The Vacuolar segment spans residues 525 to 534 (QKQHGIASSY). Residues 535–555 (FIVFYFAGVAVATWISYLELF) traverse the membrane as a helical segment. At 556–667 (GLPKTQDYAR…WSIYLMSSAW (112 aa)) the chain is on the cytoplasmic side. Positions 568–617 (GRLSDRTPSSDSHFLAPSADELPSSSSAAGRDFNPEDVEDEEPTESTSLL) are disordered. The span at 602–611 (PEDVEDEEPT) shows a compositional bias: acidic residues. A helical membrane pass occupies residues 668 to 688 (ILQFLLVAPIVIILLGQLGLF). The Vacuolar portion of the chain corresponds to 689–704 (LTSATYQIGADGGSQL). A helical membrane pass occupies residues 705 to 725 (VIYIGIAVLSVLILLPLFPFI). Residues 726–731 (HRFTYH) are Cytoplasmic-facing. A helical transmembrane segment spans residues 732–752 (IPTFLLFILIGTLVYNLTAFP). The Vacuolar segment spans residues 753-962 (FSHSNRLKLA…LVEGSYSFKL (210 aa)). The N-linked (GlcNAc...) asparagine glycan is linked to N834.

Belongs to the peptidase M28 family. Requires Zn(2+) as cofactor.

Its subcellular location is the vacuole membrane. In terms of biological role, may be involved in vacuolar sorting and osmoregulation. The sequence is that of Vacuolar membrane protease from Arthroderma benhamiae (strain ATCC MYA-4681 / CBS 112371) (Trichophyton mentagrophytes).